The sequence spans 727 residues: Elongation factor 2 (727 aa).

The region spanning 19–260 (DQIRNMGICA…MAIKHLPNPL (242 aa)) is the tr-type G domain. GTP-binding positions include 28 to 35 (AHIDHGKT), 94 to 98 (DTPGH), and 148 to 151 (NKVD). A Diphthamide modification is found at H603.

This sequence belongs to the TRAFAC class translation factor GTPase superfamily. Classic translation factor GTPase family. EF-G/EF-2 subfamily.

Its subcellular location is the cytoplasm. Catalyzes the GTP-dependent ribosomal translocation step during translation elongation. During this step, the ribosome changes from the pre-translocational (PRE) to the post-translocational (POST) state as the newly formed A-site-bound peptidyl-tRNA and P-site-bound deacylated tRNA move to the P and E sites, respectively. Catalyzes the coordinated movement of the two tRNA molecules, the mRNA and conformational changes in the ribosome. The protein is Elongation factor 2 (fusA) of Methanococcus vannielii (strain ATCC 35089 / DSM 1224 / JCM 13029 / OCM 148 / SB).